A 109-amino-acid chain; its full sequence is Nucleoid-associated protein swp_1717 (109 aa).

A disordered region spans residues 88–109 (QKDKMAEVTGGMQLPPGMKMPF).

Belongs to the YbaB/EbfC family. As to quaternary structure, homodimer.

It is found in the cytoplasm. The protein localises to the nucleoid. Its function is as follows. Binds to DNA and alters its conformation. May be involved in regulation of gene expression, nucleoid organization and DNA protection. The chain is Nucleoid-associated protein swp_1717 from Shewanella piezotolerans (strain WP3 / JCM 13877).